Reading from the N-terminus, the 1582-residue chain is Hybrid PKS-NRPS synthetase TAS1 (1582 aa).

Residues isoleucine 33–valine 387 are condensation (C) domain. The adenylation (A) domain stretch occupies residues arginine 499–asparagine 892. Positions asparagine 1015–valine 1092 constitute a Carrier domain. A Ketosynthase family 3 (KS3) domain is found at alanine 1127–serine 1574. Residues cysteine 1294 and histidine 1432 each act as for beta-ketoacyl synthase activity in the active site. A disordered region spans residues glutamate 1460 to arginine 1485. A compositionally biased stretch (polar residues) spans arginine 1462–arginine 1485. The active-site For beta-ketoacyl synthase activity is asparagine 1498.

This sequence in the N-terminal section; belongs to the NRP synthetase family. It depends on pantetheine 4'-phosphate as a cofactor.

The enzyme catalyses acetoacetyl-CoA + L-isoleucine + ATP = tenuazonic acid + AMP + diphosphate + CoA + 2 H(+). In terms of biological role, hybrid PKS-NRPS synthetase that mediates the biosynthesis of the toxin tenuazonic acid (TeA), an inhibitor of protein biosynthesis on ribosomes by suppressing the release of new protein. TAS1 alone is sufficient for TeA synthesis via the condensation of isoleucine (Ile) with acetoacetyl-CoA by the N-terminal NRPS module and subsequent cyclization conducted by the C-terminal KS domain. This Cordyceps militaris (strain CM01) (Caterpillar fungus) protein is Hybrid PKS-NRPS synthetase TAS1.